We begin with the raw amino-acid sequence, 828 residues long: Hapless 2 (828 aa).

The first 32 residues, 1-32, serve as a signal peptide directing secretion; the sequence is MKNKLINLRSKHIYKLIIIIFFCIILKYYKWC. The Extracellular segment spans residues 33–680; sequence DFKNKVFFIQ…INTVKTLIGK (648 aa). Cysteines 53 and 62 form a disulfide. Residue Asn74 is glycosylated (N-linked (GlcNAc...) asparagine). 4 cysteine pairs are disulfide-bonded: Cys142-Cys209, Cys170-Cys381, Cys172-Cys191, and Cys363-Cys388. Residues 174–191 form a cd loop; involved in gamete fusion region; the sequence is TYNYFKDDEFIKRAKLKC. 5 N-linked (GlcNAc...) asparagine glycosylation sites follow: Asn233, Asn250, Asn264, Asn293, and Asn333. Asn479, Asn516, Asn531, and Asn539 each carry an N-linked (GlcNAc...) asparagine glycan. Cys546 and Cys592 are disulfide-bonded. The helical transmembrane segment at 681–701 threads the bilayer; sequence FAIIAILIILAPALIPLLPFF. The Cytoplasmic portion of the chain corresponds to 702 to 828; it reads LNFFFLFIST…SGKSKIPPLR (127 aa). A disordered region spans residues 773 to 828; the sequence is RKNKKKFNKNNISSNIKHKKGGKKVKQKEPNRNSNHTSHEYADTSPSGKSKIPPLR. Residues 788–798 are compositionally biased toward basic residues; that stretch reads IKHKKGGKKVK. The span at 799–814 shows a compositional bias: basic and acidic residues; sequence QKEPNRNSNHTSHEYA.

It belongs to the HAP2/GCS1 family.

It localises to the cell membrane. In terms of biological role, during fertilization, required on male gametes for their fusion with female gametes, and for subsequent ookinete formation in the host. Thereby, required for mosquito-mediated transmission to other animals. Probably initiates the fusion of gamete cell membranes by inserting part of its extracellular domain into the cell membrane of a female gamete. This chain is Hapless 2, found in Plasmodium berghei (strain Anka).